Consider the following 296-residue polypeptide: 4-hydroxy-tetrahydrodipicolinate synthase (296 aa).

Thr50 is a pyruvate binding site. Tyr138 serves as the catalytic Proton donor/acceptor. Lys166 acts as the Schiff-base intermediate with substrate in catalysis. Ile208 contacts pyruvate.

The protein belongs to the DapA family. In terms of assembly, homotetramer; dimer of dimers.

The protein resides in the cytoplasm. It catalyses the reaction L-aspartate 4-semialdehyde + pyruvate = (2S,4S)-4-hydroxy-2,3,4,5-tetrahydrodipicolinate + H2O + H(+). It functions in the pathway amino-acid biosynthesis; L-lysine biosynthesis via DAP pathway; (S)-tetrahydrodipicolinate from L-aspartate: step 3/4. Its function is as follows. Catalyzes the condensation of (S)-aspartate-beta-semialdehyde [(S)-ASA] and pyruvate to 4-hydroxy-tetrahydrodipicolinate (HTPA). The sequence is that of 4-hydroxy-tetrahydrodipicolinate synthase from Thiobacillus denitrificans (strain ATCC 25259 / T1).